The following is a 257-amino-acid chain: UPF0246 protein YaaA (257 aa).

Belongs to the UPF0246 family.

In Salmonella agona (strain SL483), this protein is UPF0246 protein YaaA.